The sequence spans 523 residues: MTLSKLLYLSAIDYLNTKSKGGAHLNLTYYIVATIIIAVIAVYVDYYIRKNVSAAKISNAEEKGRNIIEDAKREAESKKKEAILEAKEEMHRLRNDFEKESKDRRNEIQRLERRIIQREEALDKKGDMLEKKEESLNKKHQELENKKSNIENLYEKQREELERLAGLTSDQAKEMLLEEVRKEIKHETAMLIKEVETKAKEEADKKAREITTYAIQRCAADHVAETTVYVVNLPNDEMKGRIIGREGRNIRTLETLTGVDLIIDDTPEAVILSAFDPVRREVARIALEKLIMDGRIHPARIEEMVEKAKKEVENNIREEGEQATFETSVHGLHSELIKLLGRLKYRTSYGQNVLKHSIEVSYLAGLMASELGMDPTLAKRAGLLHDIGKAVDHEVEGPHAIIGAEVAKRYHESSIVVNAIAAHHGDEEFESIEAILVQAADAISAARPGARRETLEAYIKRLEKLEEIANSYEGVEKSYAIQAGRELRIIVKPEVVDDAGSYEMARNMAKTIENELEYLVKLR.

A helical transmembrane segment spans residues 28-48 (TYYIVATIIIAVIAVYVDYYI). One can recognise a KH domain in the interval 227-312 (TVYVVNLPND…EMVEKAKKEV (86 aa)). One can recognise an HD domain in the interval 353-446 (VLKHSIEVSY…VQAADAISAA (94 aa)).

This sequence belongs to the RNase Y family.

It is found in the cell membrane. Functionally, endoribonuclease that initiates mRNA decay. In Clostridium tetani (strain Massachusetts / E88), this protein is Ribonuclease Y.